Here is a 153-residue protein sequence, read N- to C-terminus: Putative nuclear shuttle protein (153 aa).

Belongs to the nanoviridae nuclear shuttle protein family.

Its subcellular location is the host nucleus. The protein localises to the host cytoplasm. Functionally, putative nuclear shuttle protein. This Trifolium subterraneum (Subterranean clover) protein is Putative nuclear shuttle protein (DNA-N).